A 1075-amino-acid chain; its full sequence is Protein EXPORTIN 1A (1075 aa).

Residues 37–103 (ADQILRDLQA…KNYISEVIVQ (67 aa)) form the Importin N-terminal domain. HEAT repeat units lie at residues 91 to 130 (DGMKNYISEVIVQLSSNEASFRSERLYVNKLNVILVQIVK), 135 to 171 (AKWTSFIPDLVAAAKTSETICENCMAILKLLSEEVFD), 232 to 267 (IFESTLLETLLKFFPVPAYRNLTIQCLTEVAALNFG), 336 to 373 (SLLLAGLEYLINISYVDDTEVFKVCLDYWNSLVLELFD), 388 to 425 (MGLQPFLPGMVDGLGSQVMQRRQLYSHPMSKLRGLMIN), 474 to 513 (DTEKQMLRKLNKQLSGEEWAWNNLNTLCWAIGSISGSMAE), 563 to 600 (KFLKTVVNKLFEFMHETHPGVQDMACDTFLKIVQKCKR), 612 to 649 (PFVSELLTGLATTVQDLEPHQIHSFYESVGNMIQAESD), 682 to 719 (LKDQVVIRTVLNILQTNTSAATSLGTYFLSQISLIFLD), 756 to 793 (RETLKLIETFLDKAEDQPHIGKQFVPPMMESVLGDYAR), 798 to 835 (ARESEVLSLFATIINKYKATMLDDVPHIFEAVFQCTLE), and 894 to 934 (ETGL…VLTD).

The protein belongs to the exportin family. As to quaternary structure, interacts with RAN1. In terms of tissue distribution, expressed ubiquitously, with higher levels in stems, inflorescences and roots. Present in mature pollen grains, unpollinated pistils, and 2-week-old seedlings.

Its subcellular location is the nucleus. The protein resides in the nuclear pore complex. The protein localises to the nucleus membrane. Receptor for the leucine-rich nuclear export signal (NES). Binds cooperatively to the NES on its target protein and to the small GTPase Ran in its active GTP-bound form. Required for the maternal-to-embryonic transition and during gametophyte development. Involved in heat-induced oxidative stress basal resistance. This Arabidopsis thaliana (Mouse-ear cress) protein is Protein EXPORTIN 1A.